The following is a 261-amino-acid chain: Small ribosomal subunit protein uS2 (261 aa).

The tract at residues Gly224–Asp261 is disordered. Residues Glu245–Glu254 show a composition bias toward acidic residues.

The protein belongs to the universal ribosomal protein uS2 family.

This Lactobacillus gasseri (strain ATCC 33323 / DSM 20243 / BCRC 14619 / CIP 102991 / JCM 1131 / KCTC 3163 / NCIMB 11718 / NCTC 13722 / AM63) protein is Small ribosomal subunit protein uS2.